The sequence spans 360 residues: Ribosomal RNA small subunit methyltransferase C (360 aa).

This sequence belongs to the methyltransferase superfamily. RsmC family. Monomer.

Its subcellular location is the cytoplasm. It carries out the reaction guanosine(1207) in 16S rRNA + S-adenosyl-L-methionine = N(2)-methylguanosine(1207) in 16S rRNA + S-adenosyl-L-homocysteine + H(+). Its function is as follows. Specifically methylates the guanine in position 1207 of 16S rRNA in the 30S particle. The sequence is that of Ribosomal RNA small subunit methyltransferase C from Alteromonas mediterranea (strain DSM 17117 / CIP 110805 / LMG 28347 / Deep ecotype).